Consider the following 348-residue polypeptide: Endoplasmic reticulum junction formation protein lunapark-A (348 aa).

Residues 1–43 lie on the Cytoplasmic side of the membrane; the sequence is MSVFCLQAKPTTVEILEGIDKDIQILEDYSVKYQRQMKAVVGR. A helical transmembrane segment spans residues 44–64; sequence LLLYSILLYLMAGVVVYSWYL. Over 65–67 the chain is Lumenal; it reads PEQ. Residues 68–88 traverse the membrane as a helical segment; sequence LMGRLVLGLPFLLFPLLVWIL. The Cytoplasmic segment spans residues 89–348; the sequence is RKVLILFFAR…EEDKQSDSGD (260 aa). Residues 105–126 are a coiled coil; it reads FKLEDLKAQKRKILEDVMETET. Positions 142–211 are disordered; sequence KKKTDFDSTP…HSAPGGPPER (70 aa). The C4-type; plays a role in ER morphology zinc-finger motif lies at 277-302; the sequence is CQQCLSHNGMALKEEFEYVAFRCAYC. Residues 313–348 are disordered; that stretch reads PQAPRLPETAGEPKLPCDLNSSSCAAEEDKQSDSGD. Positions 339–348 are enriched in basic and acidic residues; that stretch reads EEDKQSDSGD.

It belongs to the lunapark family. In terms of assembly, homodimer; homodimerization requires the C4-type zinc finger motif and decreases during mitosis in a phosphorylation-dependent manner. Phosphorylated. Phosphorylation occurs during interphase. Phosphorylation also occurs during mitosis; these phosphorylations reduce both its homodimerization and the ER three-way tubular junction formation.

It localises to the endoplasmic reticulum membrane. Functionally, endoplasmic reticulum (ER)-shaping membrane protein that plays a role in determining ER morphology. Involved in the stabilization of nascent three-way ER tubular junctions within the ER network. May also play a role as a curvature-stabilizing protein within three-way ER tubular junction network. The protein is Endoplasmic reticulum junction formation protein lunapark-A (lnpka) of Takifugu rubripes (Japanese pufferfish).